Reading from the N-terminus, the 147-residue chain is Putative pre-16S rRNA nuclease (147 aa).

This sequence belongs to the YqgF nuclease family.

It localises to the cytoplasm. Functionally, could be a nuclease involved in processing of the 5'-end of pre-16S rRNA. The chain is Putative pre-16S rRNA nuclease from Latilactobacillus sakei subsp. sakei (strain 23K) (Lactobacillus sakei subsp. sakei).